We begin with the raw amino-acid sequence, 528 residues long: O-methylsterigmatocystin oxidoreductase (528 aa).

Cysteine 440 is a binding site for heme.

Belongs to the cytochrome P450 family. The cofactor is heme.

It carries out the reaction 8-O-methylsterigmatocystin + 2 reduced [NADPH--hemoprotein reductase] + 2 O2 = aflatoxin B1 + methanol + 2 oxidized [NADPH--hemoprotein reductase] + CO2 + H2O + 2 H(+). The catalysed reaction is 8-O-methyldihydrosterigmatocystin + 2 reduced [NADPH--hemoprotein reductase] + 2 O2 = aflatoxin B2 + methanol + 2 oxidized [NADPH--hemoprotein reductase] + CO2 + H2O + 2 H(+). It participates in mycotoxin biosynthesis; aflatoxin biosynthesis. Converts O-methylsterigmatocystin (OMST) to aflatoxin B1 and converts dihydro-O-methylsterigmatocystin (DHOMST) to aflatoxin B2 in the aflatoxin biosynthesis pathway. The chain is O-methylsterigmatocystin oxidoreductase (ordA) from Aspergillus flavus.